A 142-amino-acid chain; its full sequence is Large ribosomal subunit protein uL11 (142 aa).

The protein belongs to the universal ribosomal protein uL11 family. As to quaternary structure, part of the ribosomal stalk of the 50S ribosomal subunit. Interacts with L10 and the large rRNA to form the base of the stalk. L10 forms an elongated spine to which L12 dimers bind in a sequential fashion forming a multimeric L10(L12)X complex. One or more lysine residues are methylated.

Its function is as follows. Forms part of the ribosomal stalk which helps the ribosome interact with GTP-bound translation factors. In Yersinia pestis bv. Antiqua (strain Angola), this protein is Large ribosomal subunit protein uL11.